A 981-amino-acid polypeptide reads, in one-letter code: Anoctamin-3 (981 aa).

A compositionally biased stretch (polar residues) spans 1–28 (MVHHSGSIQSFKQQKGMNISKSEITTEA). Disordered regions lie at residues 1-32 (MVHH…SLKP) and 67-87 (PTSV…EESR). Residues 1 to 403 (MVHHSGSIQS…LYFAWLGWYT (403 aa)) are Cytoplasmic-facing. Residues 76–87 (DKPEHVTSEESR) are compositionally biased toward basic and acidic residues. A helical membrane pass occupies residues 404–424 (GMLIPAAVVGLCVFFYGLVTM). N425, N448, and N455 each carry an N-linked (GlcNAc...) asparagine glycan. The Extracellular segment spans residues 425 to 469 (NESQVSQEICKATEVFMCPLCDKNCSLQRLNDSCIYAKVTYLFDN). The helical transmembrane segment at 470 to 490 (GGTVFFAIFMAIWATVFLEFW) threads the bilayer. Residues 491–550 (KRRRSILTYTWDLIEWEEEEETLRPQFEAKYYRMEVINPITGKPEPHQPSSDKVTRLLVS) lie on the Cytoplasmic side of the membrane. Residues 551–571 (VSGIFFMISLVITAVFAVVVY) form a helical membrane-spanning segment. Over 572–592 (RLVVMEQFASFKWNFVKQHWQ) the chain is Extracellular. The helical transmembrane segment at 593–613 (FATSGAAVCINFIIIMLLNLA) threads the bilayer. Residues 614 to 640 (YEKIAYLLTNLEYPRTESEWENSFALK) lie on the Cytoplasmic side of the membrane. The helical transmembrane segment at 641–661 (MFLFQFVNLNSSIFYIAFFLG) threads the bilayer. Residues 662 to 761 (RFVGHPGKYN…MDEYLEMVLQ (100 aa)) are Extracellular-facing. The helical transmembrane segment at 762–782 (FGFTTIFVAAFPLAPLLALLN) threads the bilayer. The Cytoplasmic segment spans residues 783–810 (NIIEIRLDAYKFVTQWRRPLPARATDIG). Residues 811–831 (IWLGILEGIGILAVITNAFVI) traverse the membrane as a helical segment. At 832 to 914 (AITSDYIPRF…QYWHILAARL (83 aa)) the chain is on the extracellular side. N866 is a glycosylation site (N-linked (GlcNAc...) asparagine). The chain crosses the membrane as a helical span at residues 915–935 (AFIIVFEHLVFGIKSFIAYLI). Topologically, residues 936–981 (PDIPKGLRERIRREKYLVQEMMYEAELEHLQQQRRKSGQPIHHEWP) are cytoplasmic.

The protein belongs to the anoctamin family. In terms of assembly, interacts with KCNT1/Slack. As to expression, predominantly expressed in neuronal tissues. Expressed in brain.

The protein localises to the cell membrane. It catalyses the reaction a 1,2-diacyl-sn-glycero-3-phosphocholine(in) = a 1,2-diacyl-sn-glycero-3-phosphocholine(out). It carries out the reaction a beta-D-galactosyl-(1&lt;-&gt;1')-N-acylsphing-4-enine(out) = a beta-D-galactosyl-(1&lt;-&gt;1')-N-acylsphing-4-enine(in). In terms of biological role, has calcium-dependent phospholipid scramblase activity; scrambles phosphatidylcholine and galactosylceramide. Does not exhibit calcium-activated chloride channel (CaCC) activity. Seems to act as potassium channel regulator and may inhibit pain signaling; can facilitate KCNT1/Slack channel activity by promoting its full single-channel conductance at very low sodium concentrations and by increasing its sodium sensitivity. The protein is Anoctamin-3 of Mus musculus (Mouse).